Here is a 75-residue protein sequence, read N- to C-terminus: Molt-inhibiting hormone (75 aa).

3 cysteine pairs are disulfide-bonded: C7-C44, C24-C40, and C27-C53. A75 bears the Alanine amide mark.

Belongs to the arthropod CHH/MIH/GIH/VIH hormone family.

It is found in the secreted. Inhibits Y-organs where molting hormone (ecdysteroid) is secreted. A molting cycle is initiated when MIH secretion diminishes or stops. This chain is Molt-inhibiting hormone, found in Procambarus clarkii (Red swamp crayfish).